We begin with the raw amino-acid sequence, 208 residues long: FMN-dependent NADH:quinone oxidoreductase 1 (208 aa).

17–19 (SVS) lines the FMN pocket.

It belongs to the azoreductase type 1 family. In terms of assembly, homodimer. FMN serves as cofactor.

The catalysed reaction is 2 a quinone + NADH + H(+) = 2 a 1,4-benzosemiquinone + NAD(+). It carries out the reaction N,N-dimethyl-1,4-phenylenediamine + anthranilate + 2 NAD(+) = 2-(4-dimethylaminophenyl)diazenylbenzoate + 2 NADH + 2 H(+). Its function is as follows. Quinone reductase that provides resistance to thiol-specific stress caused by electrophilic quinones. Also exhibits azoreductase activity. Catalyzes the reductive cleavage of the azo bond in aromatic azo compounds to the corresponding amines. In Listeria monocytogenes serotype 4b (strain F2365), this protein is FMN-dependent NADH:quinone oxidoreductase 1.